We begin with the raw amino-acid sequence, 298 residues long: Beta-1,3-galactosyltransferase 5 (298 aa).

The Cytoplasmic segment spans residues 1-7; sequence MAFPKMR. The helical; Signal-anchor for type II membrane protein transmembrane segment at 8 to 28 threads the bilayer; sequence LMYICLLVLGALCLYFSMYSL. The Lumenal portion of the chain corresponds to 29 to 298; sequence NPFKEQSFVY…PRTLLDYWQA (270 aa). Residues N130, N174, and N231 are each glycosylated (N-linked (GlcNAc...) asparagine).

It belongs to the glycosyltransferase 31 family.

Its subcellular location is the golgi apparatus membrane. The catalysed reaction is a globoside Gb4Cer (d18:1(4E)) + UDP-alpha-D-galactose = a globoside GalGb4Cer (d18:1(4E)) + UDP + H(+). It participates in protein modification; protein glycosylation. In terms of biological role, catalyzes the transfer of Gal to GlcNAc-based acceptors with a preference for the core3 O-linked glycan GlcNAc(beta1,3)GalNAc structure. Can use glycolipid LC3Cer as an efficient acceptor. This is Beta-1,3-galactosyltransferase 5 (B3GALT5) from Gorilla gorilla gorilla (Western lowland gorilla).